Reading from the N-terminus, the 201-residue chain is Recombination protein RecR (201 aa).

The C4-type zinc-finger motif lies at 57–72 (CSDCRTFTEQDVCAIC). Positions 81–176 (GQICVVESPA…MASRIAHGVP (96 aa)) constitute a Toprim domain.

The protein belongs to the RecR family.

Functionally, may play a role in DNA repair. It seems to be involved in an RecBC-independent recombinational process of DNA repair. It may act with RecF and RecO. In Pectobacterium carotovorum subsp. carotovorum (strain PC1), this protein is Recombination protein RecR.